A 504-amino-acid chain; its full sequence is 5-epiaristolochene 1,3-dihydroxylase (504 aa).

Residues 2–22 traverse the membrane as a helical segment; the sequence is QFFSLVSIFLFLSFLFLLRKW. Cys442 is a heme binding site.

This sequence belongs to the cytochrome P450 family. The cofactor is heme.

It is found in the membrane. The catalysed reaction is (+)-5-epi-aristolochene + 2 reduced [NADPH--hemoprotein reductase] + 2 O2 = capsidiol + 2 oxidized [NADPH--hemoprotein reductase] + 2 H2O + 2 H(+). With respect to regulation, inhibited by ancymidol and ketoconazole. Functionally, involved in the biosynthesis of capsidiol. Catalyzes the successive and independent hydroxylations at the C1 and C3 positions of 5-epiaristolochene. The second hydroxylation step is 8-fold more efficient than the first hydroxylation reaction. Capable of utilizing premnaspirodiene as a substrate. The polypeptide is 5-epiaristolochene 1,3-dihydroxylase (CYP71D20) (Nicotiana tabacum (Common tobacco)).